Consider the following 225-residue polypeptide: 2-C-methyl-D-erythritol 4-phosphate cytidylyltransferase (225 aa).

Belongs to the IspD/TarI cytidylyltransferase family. IspD subfamily.

The catalysed reaction is 2-C-methyl-D-erythritol 4-phosphate + CTP + H(+) = 4-CDP-2-C-methyl-D-erythritol + diphosphate. It participates in isoprenoid biosynthesis; isopentenyl diphosphate biosynthesis via DXP pathway; isopentenyl diphosphate from 1-deoxy-D-xylulose 5-phosphate: step 2/6. Functionally, catalyzes the formation of 4-diphosphocytidyl-2-C-methyl-D-erythritol from CTP and 2-C-methyl-D-erythritol 4-phosphate (MEP). This chain is 2-C-methyl-D-erythritol 4-phosphate cytidylyltransferase, found in Cereibacter sphaeroides (strain ATCC 17023 / DSM 158 / JCM 6121 / CCUG 31486 / LMG 2827 / NBRC 12203 / NCIMB 8253 / ATH 2.4.1.) (Rhodobacter sphaeroides).